A 231-amino-acid chain; its full sequence is Large ribosomal subunit protein uL1 (231 aa).

The protein belongs to the universal ribosomal protein uL1 family. In terms of assembly, part of the 50S ribosomal subunit.

In terms of biological role, binds directly to 23S rRNA. The L1 stalk is quite mobile in the ribosome, and is involved in E site tRNA release. Its function is as follows. Protein L1 is also a translational repressor protein, it controls the translation of the L11 operon by binding to its mRNA. The polypeptide is Large ribosomal subunit protein uL1 (Francisella tularensis subsp. tularensis (strain WY96-3418)).